The following is a 351-amino-acid chain: Nicotinate-nucleotide--dimethylbenzimidazole phosphoribosyltransferase (351 aa).

The active-site Proton acceptor is Glu317.

This sequence belongs to the CobT family.

It carries out the reaction 5,6-dimethylbenzimidazole + nicotinate beta-D-ribonucleotide = alpha-ribazole 5'-phosphate + nicotinate + H(+). The protein operates within nucleoside biosynthesis; alpha-ribazole biosynthesis; alpha-ribazole from 5,6-dimethylbenzimidazole: step 1/2. Its function is as follows. Catalyzes the synthesis of alpha-ribazole-5'-phosphate from nicotinate mononucleotide (NAMN) and 5,6-dimethylbenzimidazole (DMB). This chain is Nicotinate-nucleotide--dimethylbenzimidazole phosphoribosyltransferase, found in Bradyrhizobium sp. (strain BTAi1 / ATCC BAA-1182).